The sequence spans 944 residues: Serine/threonine-protein kinase PLK4 (944 aa).

In terms of domain architecture, Protein kinase spans 12 to 265 (FKVLNLLGKG…LSSVLDHAFM (254 aa)). Residues 18 to 26 (LGKGSFACV) and lysine 41 each bind ATP. Aspartate 136 functions as the Proton acceptor in the catalytic mechanism. Disordered stretches follow at residues 327 to 396 (KDKH…YSER), 432 to 463 (RSLE…RSND), and 530 to 561 (LGIK…QQAF). Positions 378-394 (RSGTSQSQTYAKPSSYS) are enriched in polar residues. Over residues 432–447 (RSLERHTSPPVKEKTP) the composition is skewed to basic and acidic residues. Residues 548 to 561 (FGEQSKSRVPQQAF) are compositionally biased toward polar residues. In terms of domain architecture, Cryptic POLO box 1 (CPB1) spans 565–678 (TLRSIISPLN…AKFIKLVRSK (114 aa)). A Cryptic POLO box 2 (CPB2) domain is found at 679–791 (TPKVTYYTRY…GRRPALAESP (113 aa)). Residues 786 to 809 (ALAESPKTQPTPSVDSARERKEEQ) are disordered. Positions 862-940 (QVLKSVFVEN…LSSILMLFAS (79 aa)) constitute a POLO box domain.

Belongs to the protein kinase superfamily. Ser/Thr protein kinase family. CDC5/Polo subfamily. In terms of assembly, homodimer. In terms of processing, ubiquitinated; leading to its degradation by the proteasome.

The protein resides in the cytoplasm. Its subcellular location is the cytoskeleton. It localises to the microtubule organizing center. It is found in the centrosome. The protein localises to the centriole. The enzyme catalyses L-seryl-[protein] + ATP = O-phospho-L-seryl-[protein] + ADP + H(+). It catalyses the reaction L-threonyl-[protein] + ATP = O-phospho-L-threonyl-[protein] + ADP + H(+). Functionally, serine/threonine-protein kinase that plays a central role in centriole duplication. Able to trigger procentriole formation on the surface of the parental centriole cylinder, leading to the recruitment of centriole biogenesis proteins such as sass6, cpap, ccp110, cep135 and gamma-tubulin. When overexpressed, it is able to induce centrosome amplification through the simultaneous generation of multiple procentrioles adjoining each parental centriole during S phase. Its central role in centriole replication suggests a possible role in tumorigenesis, centrosome aberrations being frequently observed in tumors. Also involved in deuterosome-mediated centriole amplification in multiciliated that can generate more than 100 centrioles. In Xenopus laevis (African clawed frog), this protein is Serine/threonine-protein kinase PLK4.